We begin with the raw amino-acid sequence, 943 residues long: Isoleucine--tRNA ligase (943 aa).

The 'HIGH' region motif lies at 58 to 68 (PYANGSIHIGH). Glu-567 is a binding site for L-isoleucyl-5'-AMP. The 'KMSKS' region signature appears at 608–612 (KMSKS). Lys-611 lines the ATP pocket. Positions 906, 909, 926, and 929 each coordinate Zn(2+).

It belongs to the class-I aminoacyl-tRNA synthetase family. IleS type 1 subfamily. In terms of assembly, monomer. It depends on Zn(2+) as a cofactor.

The protein resides in the cytoplasm. The catalysed reaction is tRNA(Ile) + L-isoleucine + ATP = L-isoleucyl-tRNA(Ile) + AMP + diphosphate. Its function is as follows. Catalyzes the attachment of isoleucine to tRNA(Ile). As IleRS can inadvertently accommodate and process structurally similar amino acids such as valine, to avoid such errors it has two additional distinct tRNA(Ile)-dependent editing activities. One activity is designated as 'pretransfer' editing and involves the hydrolysis of activated Val-AMP. The other activity is designated 'posttransfer' editing and involves deacylation of mischarged Val-tRNA(Ile). This chain is Isoleucine--tRNA ligase, found in Pseudomonas aeruginosa (strain ATCC 15692 / DSM 22644 / CIP 104116 / JCM 14847 / LMG 12228 / 1C / PRS 101 / PAO1).